A 412-amino-acid chain; its full sequence is Proteasome-activating nucleotidase (412 aa).

Positions Glu15–Pro73 form a coiled coil. ATP is bound by residues Gly197 to Leu202 and His336. Positions Met410–Ala412 are docks into pockets in the proteasome alpha-ring to cause gate opening.

This sequence belongs to the AAA ATPase family. Homohexamer. The hexameric complex has a two-ring architecture resembling a top hat that caps the 20S proteasome core at one or both ends. Upon ATP-binding, the C-terminus of PAN interacts with the alpha-rings of the proteasome core by binding to the intersubunit pockets.

It localises to the cytoplasm. Functionally, ATPase which is responsible for recognizing, binding, unfolding and translocation of substrate proteins into the archaeal 20S proteasome core particle. Is essential for opening the gate of the 20S proteasome via an interaction with its C-terminus, thereby allowing substrate entry and access to the site of proteolysis. Thus, the C-termini of the proteasomal ATPase function like a 'key in a lock' to induce gate opening and therefore regulate proteolysis. Unfolding activity requires energy from ATP hydrolysis, whereas ATP binding alone promotes ATPase-20S proteasome association which triggers gate opening, and supports translocation of unfolded substrates. This Methanoculleus marisnigri (strain ATCC 35101 / DSM 1498 / JR1) protein is Proteasome-activating nucleotidase.